The chain runs to 680 residues: E3 ubiquitin-protein ligase Midline-1 (680 aa).

An RING-type zinc finger spans residues 10–60; that stretch reads CPICLELFEDPLLLPCAHSLCFNCAHRILVSHCATNEPVESINAFQCPTCR. 2 positions are modified to phosphoserine: Ser-92 and Ser-96. 2 consecutive B box-type zinc fingers follow at residues 116–165 and 172–212; these read KVLC…IEPI and GLMC…VAAL. Zn(2+)-binding residues include Cys-119, Cys-122, Cys-134, Cys-137, Cys-142, Cys-145, His-150, His-159, Cys-175, His-178, Cys-198, and His-204. Positions 205 to 264 form a coiled coil; the sequence is RDHQVAALSERYDKLKQNLESNLTNLIKRNTELETLLAKLIQTCQHVEVNASRQEAKLTE. The COS domain maps to 320-379; it reads LKENDHARFLQTAKNITERVSMATASSQVLIPEINLNDTFDTFALDFSREKKLLECLDYL. The Fibronectin type-III domain occupies 384 to 494; it reads PPAIREELCT…RSSEPGKLKT (111 aa). Over residues 484–498 the composition is skewed to polar residues; it reads SRSSEPGKLKTNSQP. 2 disordered regions span residues 484 to 503 and 516 to 535; these read SRSSEPGKLKTNSQPFRLDP and NLTVERDESSSKKSHAPERF. Residues 495 to 672 enclose the B30.2/SPRY domain; sequence NSQPFRLDPK…IVTGLPIPDH (178 aa). The span at 516 to 533 shows a compositional bias: basic and acidic residues; it reads NLTVERDESSSKKSHAPE. Ser-524 carries the post-translational modification Phosphoserine.

The protein belongs to the TRIM/RBCC family. In terms of assembly, homodimer or heterodimer with MID2. Interacts with IGBP1. Post-translationally, phosphorylated. In terms of tissue distribution, ubiquitously expressed in fetus and adult. At 9 dpc-10.5 dpc, highest expression found in frontonasal processes, branchial arches and CNS. From 12.5 dpc to 16.5 dpc, high levels found in rostral part of CNS. At 14.5 dpc, begins to be highly expressed in kidney and lung. At 16.5 dpc, highly expressed in the mucosa of the hindgut and cutaneous region of the stomach.

The protein localises to the cytoplasm. Its subcellular location is the cytoskeleton. It carries out the reaction S-ubiquitinyl-[E2 ubiquitin-conjugating enzyme]-L-cysteine + [acceptor protein]-L-lysine = [E2 ubiquitin-conjugating enzyme]-L-cysteine + N(6)-ubiquitinyl-[acceptor protein]-L-lysine.. In terms of biological role, has E3 ubiquitin ligase activity towards IGBP1, promoting its monoubiquitination, which results in deprotection of the catalytic subunit of protein phosphatase PP2A, and its subsequent degradation by polyubiquitination. The sequence is that of E3 ubiquitin-protein ligase Midline-1 (Mid1) from Mus musculus (Mouse).